The sequence spans 235 residues: Phosphoribosylaminoimidazole-succinocarboxamide synthase (235 aa).

The protein belongs to the SAICAR synthetase family.

The catalysed reaction is 5-amino-1-(5-phospho-D-ribosyl)imidazole-4-carboxylate + L-aspartate + ATP = (2S)-2-[5-amino-1-(5-phospho-beta-D-ribosyl)imidazole-4-carboxamido]succinate + ADP + phosphate + 2 H(+). The protein operates within purine metabolism; IMP biosynthesis via de novo pathway; 5-amino-1-(5-phospho-D-ribosyl)imidazole-4-carboxamide from 5-amino-1-(5-phospho-D-ribosyl)imidazole-4-carboxylate: step 1/2. This chain is Phosphoribosylaminoimidazole-succinocarboxamide synthase, found in Streptococcus pneumoniae (strain 70585).